The sequence spans 1116 residues: Disease resistance protein RGA5 (1116 aa).

The structured coiled coil (CC) domain stretch occupies residues 1–177 (MDAPASFSLG…HHGVSANLVG (177 aa)). The 285-residue stretch at 182–466 (KTKLNRWLSD…WSAEGFVSAN (285 aa)) folds into the NB-ARC domain. 9 LRR repeats span residues 608 to 631 (LFQL…ISGL), 633 to 653 (YLET…LVHL), 654 to 675 (PNLL…GCMR), 677 to 701 (LRTL…ELTN), 732 to 755 (LSNL…DISS), 786 to 808 (LHKL…DNLT), 810 to 830 (LPSL…RFIF), 835 to 857 (LPVL…AGAM), and 858 to 882 (PNLQ…LFGI). The segment at 935-971 (EEESHPLEKQHHKREKGSSAGHGVLEKESVEDSEKNT) is disordered. Over residues 958–971 (VLEKESVEDSEKNT) the composition is skewed to basic and acidic residues. Residues 997 to 1066 (RTKIVVKVHM…KCGLAELLMV (70 aa)) form the HMA domain. Residues 1000-1070 (IVVKVHMPCG…AELLMVELVE (71 aa)) form an HMA-like domain region.

The protein belongs to the disease resistance NB-LRR family. As to quaternary structure, forms homodimer or heterodimer with RGA4 through its coiled coil (CC) domain. Interacts with AVR1-Pia and AVR-CO39 through its C-terminal part containing the HMA-like domain. Expressed in leaves.

It is found in the cytoplasm. Its function is as follows. Disease resistance (R) protein that recognizes the AVR-Pia and AVR1-CO39 effector avirulence proteins from M.oryzae. Resistance proteins guard the plant against pathogens that contain an appropriate avirulence protein via an indirect interaction with this avirulence protein. That triggers a defense system including the hypersensitive response, which restricts the pathogen growth. Contribution of RGA4 is required to recognize the effector avirulence proteins AVR-Pia and AVR1-CO39 from M.oryzae. Acts as a repressor of the RGA4-mediated cell death activation. Upon infection, recognition and binding of the AVR effectors relieve the RGA5-mediated repression and triggers the hypersensitive response. Immune response triggered by the RGA4-RGA5 -mediated recognition of AVR1-CO39 confers resistance to X.oryzae pathovars. In Oryza sativa subsp. japonica (Rice), this protein is Disease resistance protein RGA5.